A 127-amino-acid chain; its full sequence is Large ribosomal subunit protein bL17 (127 aa).

This sequence belongs to the bacterial ribosomal protein bL17 family. Part of the 50S ribosomal subunit. Contacts protein L32.

This Lactiplantibacillus plantarum (strain ATCC BAA-793 / NCIMB 8826 / WCFS1) (Lactobacillus plantarum) protein is Large ribosomal subunit protein bL17.